Consider the following 716-residue polypeptide: Polyribonucleotide nucleotidyltransferase (716 aa).

Positions 495 and 501 each coordinate Mg(2+). In terms of domain architecture, KH spans 562–621 (PRLFRIQINPEQIGLVIGPGGKTIRSITEQTGAKIDIEDTGAVTISAVDADSALRAKSII). The S1 motif domain maps to 631-699 (GDVYIGKVTR…QKGRVNLTRK (69 aa)).

This sequence belongs to the polyribonucleotide nucleotidyltransferase family. It depends on Mg(2+) as a cofactor.

The protein localises to the cytoplasm. The enzyme catalyses RNA(n+1) + phosphate = RNA(n) + a ribonucleoside 5'-diphosphate. Involved in mRNA degradation. Catalyzes the phosphorolysis of single-stranded polyribonucleotides processively in the 3'- to 5'-direction. This is Polyribonucleotide nucleotidyltransferase from Synechococcus sp. (strain ATCC 27144 / PCC 6301 / SAUG 1402/1) (Anacystis nidulans).